The primary structure comprises 209 residues: Uracil phosphoribosyltransferase (209 aa).

5-phospho-alpha-D-ribose 1-diphosphate contacts are provided by residues Arg-79, Arg-104, and 131–139; that span reads DPMLATGNS. Residues Ile-194 and 199-201 each bind uracil; that span reads GDA. Asp-200 provides a ligand contact to 5-phospho-alpha-D-ribose 1-diphosphate.

The protein belongs to the UPRTase family. Mg(2+) is required as a cofactor.

It catalyses the reaction UMP + diphosphate = 5-phospho-alpha-D-ribose 1-diphosphate + uracil. The protein operates within pyrimidine metabolism; UMP biosynthesis via salvage pathway; UMP from uracil: step 1/1. Allosterically activated by GTP. In terms of biological role, catalyzes the conversion of uracil and 5-phospho-alpha-D-ribose 1-diphosphate (PRPP) to UMP and diphosphate. This is Uracil phosphoribosyltransferase from Variovorax paradoxus (strain S110).